We begin with the raw amino-acid sequence, 495 residues long: Putative aldehyde dehydrogenase AldA (495 aa).

Position 212 to 218 (212 to 218) interacts with NAD(+); the sequence is GKGSESG. Residues Glu-256 and Cys-290 contribute to the active site.

The protein belongs to the aldehyde dehydrogenase family.

It carries out the reaction an aldehyde + NAD(+) + H2O = a carboxylate + NADH + 2 H(+). The polypeptide is Putative aldehyde dehydrogenase AldA (aldA) (Staphylococcus aureus (strain MRSA252)).